We begin with the raw amino-acid sequence, 501 residues long: MAEEKYIMAIDQGTTSSRAIIFDKKGNKIGSSQKEFTQYFPNAGWVEHNANEIWNSVQSVIAGSLIESGVKPTDIAGIGITNQRETTVVWDKATGLPIYNAIVWQSRQTTPIADQLKEDGYSEMIHEKTGLIIDAYFSATKVRWILDHVEGAQERAENGELMFGTIDTWLVWKLTGDTHVTDYSNASRTMLFNIHDLDWDQEILDLLNIPRVMLPKVVSNSEVYGLTKNYHFYGSEVPIAGMAGDQQAALFGQMAFEPGMVKNTYGTGSFIVMNTGEEPQLSKNNLLTTIGYGINGKVYYALEGSIFVAGSAIQWLRDGLKMLQTAAESEAVAKASTGHNEVYVVPAFTGLGAPYWDSQARGAVFGLTRGTTREDFVKATLQAVAYQVRDIIDTMKEDTGIDIPVLKVDGGAANNDFLMQFQADILNTAVQRAHNLETTALGAAFLAGLAVGFWKDLEEIKAFQEEGQQFEPIMAEEEREDLYEGWQQAVAATQQFKRKNK.

T14 lines the ADP pocket. 3 residues coordinate ATP: T14, T15, and S16. Residue T14 coordinates sn-glycerol 3-phosphate. R18 provides a ligand contact to ADP. 3 residues coordinate sn-glycerol 3-phosphate: R84, E85, and Y136. The glycerol site is built by R84, E85, and Y136. H231 carries the post-translational modification Phosphohistidine; by HPr. D245 lines the sn-glycerol 3-phosphate pocket. Glycerol contacts are provided by D245 and Q246. ADP-binding residues include T267 and G310. Residues T267, G310, Q314, and G411 each coordinate ATP. Residues G411 and N415 each contribute to the ADP site.

This sequence belongs to the FGGY kinase family. Homotetramer and homodimer (in equilibrium). In terms of processing, the phosphoenolpyruvate-dependent sugar phosphotransferase system (PTS), including enzyme I, and histidine-containing protein (HPr) are required for the phosphorylation of His-231, which leads to the activation of the enzyme.

The enzyme catalyses glycerol + ATP = sn-glycerol 3-phosphate + ADP + H(+). It participates in polyol metabolism; glycerol degradation via glycerol kinase pathway; sn-glycerol 3-phosphate from glycerol: step 1/1. Its activity is regulated as follows. Activated by phosphorylation and inhibited by fructose 1,6-bisphosphate (FBP). Its function is as follows. Key enzyme in the regulation of glycerol uptake and metabolism. Catalyzes the phosphorylation of glycerol to yield sn-glycerol 3-phosphate. The protein is Glycerol kinase of Enterococcus faecalis (strain ATCC 700802 / V583).